The following is a 334-amino-acid chain: Glycosylinositol phosphorylceramide mannosyl transferase 1 (334 aa).

The Cytoplasmic portion of the chain corresponds to 1–26; it reads MGGGEVSKEMGACSLAYRRGDQKLRK. Residues 27-49 form a helical; Signal-anchor for type II membrane protein membrane-spanning segment; sequence FVTARSTKFLLFCCIAFVLVTIV. The Lumenal segment spans residues 50–334; that stretch reads CRSSRPWVNS…AVDSRNLWFW (285 aa). A glycan (N-linked (GlcNAc...) asparagine) is linked at Asn-58. Residues 145 to 150, 166 to 168, Arg-196, and 258 to 262 each bind substrate; these read DSLNNR, DDD, and RNCED. Asp-168 is a binding site for Mn(2+). Cys-260 and Cys-305 form a disulfide bridge. Asp-262 is a catalytic residue. An N-linked (GlcNAc...) asparagine glycan is attached at Asn-271. Residues 289-302 and 292-302 each bind substrate; these read STGI…TEKR and ISSIGGHTEKR.

It belongs to the glycosyltransferase 64 family. Requires Mn(2+) as cofactor. As to expression, expressed in leaves, roots, stem, and flowers.

The protein localises to the golgi apparatus membrane. The protein operates within protein modification; protein glycosylation. It functions in the pathway sphingolipid metabolism. Its function is as follows. Mannosyl transferase (ManT) required for the biosynthesis of mannose-carrying glycosylinositol phosphorylceramides (GIPCs). Maybe involved in cell-cell adhesion that maintains the integrity of organs by providing mechanical strength and facilitating the movement of metabolites throughout the plant during development. Prevents abscisic acid- (ABA-) mediated effects on development (e.g. cell size, flowering time, senescence). Probably implicated in beta-(1,4)-galactan biosynthesis thus being a cell-wall synthesis-related (CWSR) protein. The sequence is that of Glycosylinositol phosphorylceramide mannosyl transferase 1 from Arabidopsis thaliana (Mouse-ear cress).